We begin with the raw amino-acid sequence, 348 residues long: Uroporphyrinogen decarboxylase (348 aa).

Substrate is bound by residues 27-31, phenylalanine 46, aspartate 76, tyrosine 152, serine 207, and histidine 320; that span reads RQAGR.

The protein belongs to the uroporphyrinogen decarboxylase family. As to quaternary structure, homodimer.

Its subcellular location is the cytoplasm. It carries out the reaction uroporphyrinogen III + 4 H(+) = coproporphyrinogen III + 4 CO2. The protein operates within porphyrin-containing compound metabolism; protoporphyrin-IX biosynthesis; coproporphyrinogen-III from 5-aminolevulinate: step 4/4. Functionally, catalyzes the decarboxylation of four acetate groups of uroporphyrinogen-III to yield coproporphyrinogen-III. The protein is Uroporphyrinogen decarboxylase of Bacillus cytotoxicus (strain DSM 22905 / CIP 110041 / 391-98 / NVH 391-98).